Here is a 45-residue protein sequence, read N- to C-terminus: Defensin Tk-AMP-D4 (45 aa).

Cystine bridges form between cysteine 3–cysteine 45, cysteine 14–cysteine 34, cysteine 20–cysteine 39, and cysteine 24–cysteine 41.

Plant defense peptide. This chain is Defensin Tk-AMP-D4, found in Triticum kiharae (Wheat).